The following is a 205-amino-acid chain: Low-density lipoprotein receptor class A domain-containing protein 1 (205 aa).

A helical membrane pass occupies residues 43–63 (LLLLLATVAALIALVTILGLP). An LDL-receptor class A 1 domain is found at 71 to 114 (ACITLTNRTGFLCHDQRSCIPASGVCDGVRTCTHGEDEDESLCR). Intrachain disulfides connect cysteine 72/cysteine 89, cysteine 83/cysteine 102, cysteine 96/cysteine 113, cysteine 141/cysteine 160, cysteine 163/cysteine 180, and cysteine 170/cysteine 193. One can recognise an LDL-receptor class A 2; atypical domain in the interval 115 to 161 (DVPQSLPHFLVAHCGDPASWIYSDQKCDGTNNCGDCSDELSPVTVCP). The 42-residue stretch at 162 to 203 (PCGPGWWRCPSTFFKYCDCIPRHLCRDHVQHCSDWSDEYACP) folds into the LDL-receptor class A 3; atypical domain.

This sequence belongs to the LDLR family.

The protein localises to the membrane. The protein is Low-density lipoprotein receptor class A domain-containing protein 1 (LDLRAD1) of Homo sapiens (Human).